Here is a 674-residue protein sequence, read N- to C-terminus: Metal-nicotianamine transporter YSL2 (674 aa).

A disordered region spans residues 1–29; that stretch reads MEAAAPEIERCDAGDVESDHDGAAAAAER. Residues 7-22 are compositionally biased toward basic and acidic residues; sequence EIERCDAGDVESDHDG. A run of 14 helical transmembrane segments spans residues 41-61, 64-84, 118-138, 162-182, 224-244, 283-303, 329-349, 392-412, 420-440, 452-472, 506-526, 559-579, 604-624, and 633-653; these read GMVAALLIGFVYTVIIMKLAL, GIIPTLNVSAALLAFLALRGW, CAVACYTMGFGGGFGSSLLAL, GVGWMTGFLFAISFVGLLNLL, GFLNCFGISLLWSFFQWFYTG, LVNLSALFGAILSWGIMWPLI, FMCVALIMGDGLYHFIKVTGI, LAYAGYALLSIVAVIAIPIMF, VVVAFVLAPVLGFSNAYGTGL, IALFIFAAWGGRDNGVIAGLV, VGQAIGTAMGCIIAPLTFLLF, SALPKHCLELSAGFFAFSVLI, FLVGANFAIDMCVGSLIVFAW, and ALLVPAVASGFICGDGIWMFP.

The protein belongs to the YSL (TC 2.A.67.2) family. In terms of tissue distribution, expressed in phloem cells of vascular bundles in leaves and leaf sheaths. Expressed at low levels in phloem companion cells in the central cylinder of roots, but not in the epidermal or cortical cells.

The protein resides in the cell membrane. Involved in the phloem transport of iron and manganese and their translocation into the grain. Transports iron- and manganese-nicotianamine chelates, but not iron-phytosiderophore. This chain is Metal-nicotianamine transporter YSL2 (YSL2), found in Oryza sativa subsp. japonica (Rice).